Reading from the N-terminus, the 330-residue chain is Methionyl-tRNA formyltransferase (330 aa).

121–124 (SLLP) serves as a coordination point for (6S)-5,6,7,8-tetrahydrofolate.

Belongs to the Fmt family.

It catalyses the reaction L-methionyl-tRNA(fMet) + (6R)-10-formyltetrahydrofolate = N-formyl-L-methionyl-tRNA(fMet) + (6S)-5,6,7,8-tetrahydrofolate + H(+). Attaches a formyl group to the free amino group of methionyl-tRNA(fMet). The formyl group appears to play a dual role in the initiator identity of N-formylmethionyl-tRNA by promoting its recognition by IF2 and preventing the misappropriation of this tRNA by the elongation apparatus. The protein is Methionyl-tRNA formyltransferase of Burkholderia cenocepacia (strain ATCC BAA-245 / DSM 16553 / LMG 16656 / NCTC 13227 / J2315 / CF5610) (Burkholderia cepacia (strain J2315)).